Reading from the N-terminus, the 186-residue chain is Peptidyl-tRNA hydrolase (186 aa).

Y14 contacts tRNA. The active-site Proton acceptor is the H19. TRNA-binding residues include Y64, N66, and N113.

This sequence belongs to the PTH family. In terms of assembly, monomer.

It is found in the cytoplasm. It catalyses the reaction an N-acyl-L-alpha-aminoacyl-tRNA + H2O = an N-acyl-L-amino acid + a tRNA + H(+). Its function is as follows. Hydrolyzes ribosome-free peptidyl-tRNAs (with 1 or more amino acids incorporated), which drop off the ribosome during protein synthesis, or as a result of ribosome stalling. Catalyzes the release of premature peptidyl moieties from peptidyl-tRNA molecules trapped in stalled 50S ribosomal subunits, and thus maintains levels of free tRNAs and 50S ribosomes. The chain is Peptidyl-tRNA hydrolase from Agathobacter rectalis (strain ATCC 33656 / DSM 3377 / JCM 17463 / KCTC 5835 / VPI 0990) (Eubacterium rectale).